Here is a 500-residue protein sequence, read N- to C-terminus: Carnosic acid synthase (500 aa).

The chain crosses the membrane as a helical span at residues 4-24 (LILLSLAFLASCVVAYSRRRP). Cysteine 443 lines the heme pocket.

This sequence belongs to the cytochrome P450 family. Requires heme as cofactor. As to expression, mostly expressed in young leaves, particularly in glandular trichomes.

Its subcellular location is the membrane. It carries out the reaction 11-hydroxyferruginol + 3 reduced [NADPH--hemoprotein reductase] + 3 O2 = carnosate + 3 oxidized [NADPH--hemoprotein reductase] + 4 H2O + 4 H(+). It catalyses the reaction miltiradiene + 2 reduced [NADPH--hemoprotein reductase] + 2 O2 = miltiradien-20-al + 2 oxidized [NADPH--hemoprotein reductase] + 3 H2O + 2 H(+). The enzyme catalyses ferruginol + 3 reduced [NADPH--hemoprotein reductase] + 3 O2 = pisiferate + 3 oxidized [NADPH--hemoprotein reductase] + 4 H2O + 4 H(+). Its pathway is secondary metabolite biosynthesis; terpenoid biosynthesis. Its function is as follows. Monooxygenase involved in the biosynthesis of carnosate, a potent antioxidant labdane-related diterpene natural product. Catalyzes the oxidation of 11-hydroxyferruginol to produce carnosate. Mediates the conversion of miltiradien into miltiradien-20-al. Also involved in the production of pisiferic acid and derivative products from ferruginol. The polypeptide is Carnosic acid synthase (Salvia fruticosa (Greek sage)).